A 109-amino-acid polypeptide reads, in one-letter code: MYQLQFINLVYDTTKLTHLEQTNINLFIGNWSNHQLQKSICIRHGDDTSHNQYHILFIDTAHQRIKFSSIDNEEITYILDYDDTQHILMQTSSKQGIGTSRPIVYERLV.

A binds to staphopain B region spans residues 97-101 (IGTSR).

Belongs to the protease inhibitor I57 (SspC) family. As to quaternary structure, forms a stable non-covalent complex with prematurely activated/folded SspB.

The protein resides in the cytoplasm. In terms of biological role, specifically inhibits the cysteine protease staphopain B (SspB) by blocking the active site of the enzyme. Probably required to protect cytoplasmic proteins from being degraded by prematurely activated/folded prostaphopain B. Also involved in growth capacity, viability and bacterial morphology. This Staphylococcus aureus (strain Mu50 / ATCC 700699) protein is Staphostatin B (sspC).